The sequence spans 407 residues: Probable succinyl-diaminopimelate desuccinylase (407 aa).

His-72 contacts Zn(2+). Asp-74 is an active-site residue. A Zn(2+)-binding site is contributed by Asp-105. Residue Glu-139 is the Proton acceptor of the active site. Zn(2+) is bound by residues Glu-140, Glu-165, and His-378.

Belongs to the peptidase M20A family. Zn(2+) is required as a cofactor. The cofactor is Co(2+).

The enzyme catalyses N-succinyl-(2S,6S)-2,6-diaminopimelate + H2O = (2S,6S)-2,6-diaminopimelate + succinate. It participates in amino-acid biosynthesis; L-lysine biosynthesis via DAP pathway; LL-2,6-diaminopimelate from (S)-tetrahydrodipicolinate (succinylase route): step 3/3. This Staphylococcus aureus (strain N315) protein is Probable succinyl-diaminopimelate desuccinylase (dapE).